A 275-amino-acid polypeptide reads, in one-letter code: NAD kinase (275 aa).

The Proton acceptor role is filled by Asp68. NAD(+)-binding positions include Asp68 to Gly69, Arg73, Asn136 to Glu137, Lys147, Arg164, Asp166, Thr177 to Ser182, Ala201, and Gln236.

This sequence belongs to the NAD kinase family. A divalent metal cation is required as a cofactor.

It localises to the cytoplasm. The catalysed reaction is NAD(+) + ATP = ADP + NADP(+) + H(+). Its function is as follows. Involved in the regulation of the intracellular balance of NAD and NADP, and is a key enzyme in the biosynthesis of NADP. Catalyzes specifically the phosphorylation on 2'-hydroxyl of the adenosine moiety of NAD to yield NADP. This chain is NAD kinase, found in Methanosarcina acetivorans (strain ATCC 35395 / DSM 2834 / JCM 12185 / C2A).